We begin with the raw amino-acid sequence, 447 residues long: Alpha-1,6-mannosyl-glycoprotein 2-beta-N-acetylglucosaminyltransferase (447 aa).

The Cytoplasmic portion of the chain corresponds to 1-9; that stretch reads MRFRIYKRK. Residues 10 to 29 traverse the membrane as a helical; Signal-anchor for type II membrane protein segment; sequence VLILTLVVAACGFVLWSSNG. Over 30 to 447 the chain is Lumenal; sequence RQRKNEALAP…ELCKSYRRLQ (418 aa). N-linked (GlcNAc...) asparagine glycans are attached at residues Asn-69 and Asn-86. Residues 123–127 and Asp-154 contribute to the substrate site; that span reads QVHNR. Cys-196 and Cys-210 are joined by a disulfide. 229–233 serves as a coordination point for substrate; the sequence is QTKHH. Asp-261 is a Mn(2+) binding site. A disulfide bond links Cys-283 and Cys-286. Residue Arg-298 coordinates substrate. Disulfide bonds link Cys-334–Cys-357, Cys-339–Cys-440, and Cys-378–Cys-386. Position 374 (His-374) interacts with Mn(2+).

This sequence belongs to the glycosyltransferase 16 (GT16) protein family. Homodimer. Mn(2+) is required as a cofactor.

The protein localises to the golgi apparatus membrane. The catalysed reaction is an N(4)-{beta-D-GlcNAc-(1-&gt;2)-alpha-D-Man-(1-&gt;3)-[alpha-D-Man-(1-&gt;6)]-beta-D-Man-(1-&gt;4)-beta-D-GlcNAc-(1-&gt;4)-beta-D-GlcNAc}-L-asparaginyl-[protein] + UDP-N-acetyl-alpha-D-glucosamine = N(4)-{beta-D-GlcNAc-(1-&gt;2)-alpha-D-Man-(1-&gt;3)-[beta-D-GlcNAc-(1-&gt;2)-alpha-D-Man-(1-&gt;6)]-beta-D-Man-(1-&gt;4)-beta-D-GlcNAc-(1-&gt;4)-beta-D-GlcNAc}-L-asparaginyl-[protein] + UDP + H(+). It participates in protein modification; protein glycosylation. In terms of biological role, plays an essential role in protein N-glycosylation. Catalyzes the transfer of N-acetylglucosamine (GlcNAc) onto the free terminal mannose moiety in the core structure of the nascent N-linked glycan chain, giving rise to the second branch in complex glycans. The protein is Alpha-1,6-mannosyl-glycoprotein 2-beta-N-acetylglucosaminyltransferase (MGAT2) of Homo sapiens (Human).